The primary structure comprises 284 residues: Tropomyosin alpha-1 chain (284 aa).

Residues 1–40 form a disordered region; it reads MDAIKKKMQMLKLDKENALDRAEQAEADKKGAEDKSKQLE. Residues 1–284 are a coiled coil; sequence MDAIKKKMQM…DHALNDMTSI (284 aa). Basic and acidic residues predominate over residues 12–40; it reads KLDKENALDRAEQAEADKKGAEDKSKQLE.

Belongs to the tropomyosin family. As to quaternary structure, homodimer. Heterodimer of an alpha (TPM1, TPM3 or TPM4) and a beta (TPM2) chain.

The protein localises to the cytoplasm. Its subcellular location is the cytoskeleton. Binds to actin filaments in muscle and non-muscle cells. Plays a central role, in association with the troponin complex, in the calcium dependent regulation of vertebrate striated muscle contraction. Smooth muscle contraction is regulated by interaction with caldesmon. In non-muscle cells is implicated in stabilizing cytoskeleton actin filaments. The polypeptide is Tropomyosin alpha-1 chain (tpm1) (Rana temporaria (European common frog)).